The following is a 188-amino-acid chain: MMDKRLVKISKTLSMLLRHHPEKLGLVLDQYGRTDWKTLVRRFNAHYQMHLDRQVLQAIMAQSTKKRFALEGTTIRAVYGHSVPVMPLTPATEPPQWLYHGTSHQAATVIAKEGLLPMNRDFVHLSEDVATARQVGARHDTHPVIYRIAARDAAKNGILFYPTSSRVWLVSELPARFLHHLTSYFRRP.

The protein belongs to the KptA/TPT1 family.

Its function is as follows. Removes the 2'-phosphate from RNA via an intermediate in which the phosphate is ADP-ribosylated by NAD followed by a presumed transesterification to release the RNA and generate ADP-ribose 1''-2''-cyclic phosphate (APPR&gt;P). May function as an ADP-ribosylase. This Lacticaseibacillus paracasei (strain ATCC 334 / BCRC 17002 / CCUG 31169 / CIP 107868 / KCTC 3260 / NRRL B-441) (Lactobacillus paracasei) protein is Probable RNA 2'-phosphotransferase.